The following is a 266-amino-acid chain: Tryptophan synthase alpha chain (266 aa).

Catalysis depends on proton acceptor residues Glu49 and Asp60.

Belongs to the TrpA family. As to quaternary structure, tetramer of two alpha and two beta chains.

The catalysed reaction is (1S,2R)-1-C-(indol-3-yl)glycerol 3-phosphate + L-serine = D-glyceraldehyde 3-phosphate + L-tryptophan + H2O. It participates in amino-acid biosynthesis; L-tryptophan biosynthesis; L-tryptophan from chorismate: step 5/5. The alpha subunit is responsible for the aldol cleavage of indoleglycerol phosphate to indole and glyceraldehyde 3-phosphate. The sequence is that of Tryptophan synthase alpha chain from Opitutus terrae (strain DSM 11246 / JCM 15787 / PB90-1).